Here is a 569-residue protein sequence, read N- to C-terminus: Urease subunit alpha (569 aa).

A Urease domain is found at 132-569; sequence GGIDSHIHFI…LPLAQRYFLF (438 aa). Ni(2+) contacts are provided by histidine 137, histidine 139, and lysine 220. Lysine 220 carries the post-translational modification N6-carboxylysine. Histidine 222 lines the substrate pocket. Histidine 249 and histidine 275 together coordinate Ni(2+). The Proton donor role is filled by histidine 323. Aspartate 363 is a Ni(2+) binding site.

The protein belongs to the metallo-dependent hydrolases superfamily. Urease alpha subunit family. As to quaternary structure, heterotrimer of UreA (gamma), UreB (beta) and UreC (alpha) subunits. Three heterotrimers associate to form the active enzyme. Ni cation is required as a cofactor. In terms of processing, carboxylation allows a single lysine to coordinate two nickel ions.

Its subcellular location is the cytoplasm. It carries out the reaction urea + 2 H2O + H(+) = hydrogencarbonate + 2 NH4(+). Its pathway is nitrogen metabolism; urea degradation; CO(2) and NH(3) from urea (urease route): step 1/1. The protein is Urease subunit alpha of Dechloromonas aromatica (strain RCB).